The sequence spans 371 residues: Zinc transporter ZIP13 (371 aa).

Topologically, residues 1–7 are lumenal; it reads MPGCPCP. A helical transmembrane segment spans residues 8-28; the sequence is GCGMAGPRLLFLTALALELLE. Residues 29-68 are Cytoplasmic-facing; sequence RAGGSQPALRSRGTATACRLDNKESESWGALLSGERLDTW. A helical membrane pass occupies residues 69–89; sequence ICSLLGSLMVGLSGVFPLLVI. Residues 90–108 are Lumenal-facing; the sequence is PLEMGTMLRSEAGAWRLKQ. A helical transmembrane segment spans residues 109–129; that stretch reads LLSFALGGLLGNVFLHLLPEA. Over 130–149 the chain is Cytoplasmic; sequence WAYTCSASPGGEGQSLQQQQ. Residues 150-170 form a helical membrane-spanning segment; it reads QLGLWVIAGILTFLALEKMFL. Residues 171-235 are Lumenal-facing; the sequence is DSKEEGTSQA…TIDNFTHGLA (65 aa). Residues 236–256 form a helical membrane-spanning segment; that stretch reads VAASFLVSKKIGLLTTMAILL. Positions 257–262 match the XEXPHE-motif motif; sequence HEIPHE. Residues 257-278 lie on the Cytoplasmic side of the membrane; that stretch reads HEIPHEVGDFAILLRAGFDRWS. The chain crosses the membrane as a helical span at residues 279 to 299; the sequence is AAKLQLSTALGGLLGAGFAIC. The Lumenal portion of the chain corresponds to 300-316; that stretch reads TQSPKGVVGCSPAAEET. Residues 317–337 form a helical membrane-spanning segment; it reads AAWVLPFTSGGFLYIALVNVL. The Cytoplasmic portion of the chain corresponds to 338–349; it reads PDLLEEEDPWRS. A helical membrane pass occupies residues 350-370; it reads LQQLLLLCAGIVVMVLFSLFV. Residue Asp-371 is a topological domain, lumenal.

It belongs to the ZIP transporter (TC 2.A.5) family. As to quaternary structure, homodimer.

It localises to the golgi apparatus membrane. Its subcellular location is the cytoplasmic vesicle membrane. It is found in the endoplasmic reticulum membrane. The catalysed reaction is Zn(2+)(in) = Zn(2+)(out). Functionally, functions as a zinc transporter transporting Zn(2+) from the Golgi apparatus to the cytosol and thus influences the zinc level at least in areas of the cytosol. May regulate beige adipocyte differentiation. The polypeptide is Zinc transporter ZIP13 (Homo sapiens (Human)).